The primary structure comprises 65 residues: Large ribosomal subunit protein bL35 (65 aa).

The disordered stretch occupies residues methionine 1–glycine 20.

This sequence belongs to the bacterial ribosomal protein bL35 family.

This chain is Large ribosomal subunit protein bL35, found in Bacteroides thetaiotaomicron (strain ATCC 29148 / DSM 2079 / JCM 5827 / CCUG 10774 / NCTC 10582 / VPI-5482 / E50).